We begin with the raw amino-acid sequence, 170 residues long: MSGESGFKNKSISEIVKEIYENIDGMTMSGKKDGNSNIGGFIATRHKEWYDKASIVNIIYEGYVTYGGMTGRDMGAMAQGLNESMDFEYLKSRCKQVEYLANKLDKYGVPFQRPFGEHALFIDAKKILGHIPIDDLIAQTLAIEIYLEGGVGSVEIGTLLADRDPITQEN.

Lys-32 is subject to N6-(pyridoxal phosphate)lysine.

The protein belongs to the beta-eliminating lyase family. Requires pyridoxal 5'-phosphate as cofactor.

The chain is Putative beta-eliminating lyase-like protein from Dictyostelium discoideum (Social amoeba).